Here is a 216-residue protein sequence, read N- to C-terminus: FGFR1 oncogene partner 2 homolog (216 aa).

2 coiled-coil regions span residues 33 to 102 and 131 to 185; these read TTTL…LIMS and SKEL…ITRA. The tract at residues 193-216 is disordered; the sequence is EDAAESSSHSASSVPNTDLSLRKS. Residues 206-216 are compositionally biased toward polar residues; that stretch reads VPNTDLSLRKS.

It belongs to the SIKE family.

The protein resides in the cytoplasm. The chain is FGFR1 oncogene partner 2 homolog (fgfr1op2) from Xenopus tropicalis (Western clawed frog).